The chain runs to 328 residues: UPF0421 protein SE_1574 (328 aa).

4 consecutive transmembrane segments (helical) span residues 26–46 (LFCMLLNLTPIFAILTAIVTI), 61–81 (LPATVIGALFAVVFTYVFGDQ), 109–129 (AVLTSVAMIPSIHEAYVFNFF), and 132–152 (LLTALIGLVTAGLVNFIILPP).

Belongs to the UPF0421 family.

The protein resides in the cell membrane. The protein is UPF0421 protein SE_1574 of Staphylococcus epidermidis (strain ATCC 12228 / FDA PCI 1200).